The chain runs to 427 residues: 3-phosphoshikimate 1-carboxyvinyltransferase (427 aa).

The 3-phosphoshikimate site is built by Lys-20, Ser-21, and Arg-25. A phosphoenolpyruvate-binding site is contributed by Lys-20. Residues Gly-92 and Arg-120 each contribute to the phosphoenolpyruvate site. 4 residues coordinate 3-phosphoshikimate: Ser-166, Gln-168, Asp-312, and Lys-339. Position 168 (Gln-168) interacts with phosphoenolpyruvate. The active-site Proton acceptor is the Asp-312. The phosphoenolpyruvate site is built by Arg-343 and Arg-385.

Belongs to the EPSP synthase family. In terms of assembly, monomer.

The protein localises to the cytoplasm. It catalyses the reaction 3-phosphoshikimate + phosphoenolpyruvate = 5-O-(1-carboxyvinyl)-3-phosphoshikimate + phosphate. Its pathway is metabolic intermediate biosynthesis; chorismate biosynthesis; chorismate from D-erythrose 4-phosphate and phosphoenolpyruvate: step 6/7. In terms of biological role, catalyzes the transfer of the enolpyruvyl moiety of phosphoenolpyruvate (PEP) to the 5-hydroxyl of shikimate-3-phosphate (S3P) to produce enolpyruvyl shikimate-3-phosphate and inorganic phosphate. In Streptococcus thermophilus (strain ATCC BAA-250 / LMG 18311), this protein is 3-phosphoshikimate 1-carboxyvinyltransferase.